A 182-amino-acid polypeptide reads, in one-letter code: Crossover junction endodeoxyribonuclease RuvC (182 aa).

Active-site residues include aspartate 7, glutamate 69, and aspartate 141. Positions 7, 69, and 141 each coordinate Mg(2+).

This sequence belongs to the RuvC family. Homodimer which binds Holliday junction (HJ) DNA. The HJ becomes 2-fold symmetrical on binding to RuvC with unstacked arms; it has a different conformation from HJ DNA in complex with RuvA. In the full resolvosome a probable DNA-RuvA(4)-RuvB(12)-RuvC(2) complex forms which resolves the HJ. The cofactor is Mg(2+).

The protein resides in the cytoplasm. The enzyme catalyses Endonucleolytic cleavage at a junction such as a reciprocal single-stranded crossover between two homologous DNA duplexes (Holliday junction).. The RuvA-RuvB-RuvC complex processes Holliday junction (HJ) DNA during genetic recombination and DNA repair. Endonuclease that resolves HJ intermediates. Cleaves cruciform DNA by making single-stranded nicks across the HJ at symmetrical positions within the homologous arms, yielding a 5'-phosphate and a 3'-hydroxyl group; requires a central core of homology in the junction. The consensus cleavage sequence is 5'-(A/T)TT(C/G)-3'. Cleavage occurs on the 3'-side of the TT dinucleotide at the point of strand exchange. HJ branch migration catalyzed by RuvA-RuvB allows RuvC to scan DNA until it finds its consensus sequence, where it cleaves and resolves the cruciform DNA. This chain is Crossover junction endodeoxyribonuclease RuvC, found in Variovorax paradoxus (strain S110).